We begin with the raw amino-acid sequence, 196 residues long: Heat shock protein beta-8 (196 aa).

A phosphoserine mark is found at serine 24 and serine 57. Threonine 63 is subject to Phosphothreonine; by PKC; in vitro. Residues arginine 71 and arginine 78 each carry the asymmetric dimethylarginine modification. Residues threonine 74 to glutamate 185 form the sHSP domain. A disordered region spans residues threonine 176–threonine 196. Residues phenylalanine 177–threonine 196 show a composition bias toward polar residues.

This sequence belongs to the small heat shock protein (HSP20) family. In terms of assembly, monomer. Forms a ternary complex with BAG3 and HSPA1A. Component of the chaperone-assisted selective autophagy (CASA) complex consisting of BAG3, HSPA8/HSC70, HSPB8 and STUB1/CHIP. Interacts with HSPB1. Interacts with DNAJB6. Interacts with BAG3. Predominantly expressed in skeletal muscle and heart.

The protein localises to the cytoplasm. It localises to the nucleus. In terms of biological role, involved in the chaperone-assisted selective autophagy (CASA), a crucial process for protein quality control, particularly in mechanical strained cells and tissues such as muscle. Displays temperature-dependent chaperone activity. This Homo sapiens (Human) protein is Heat shock protein beta-8 (HSPB8).